A 287-amino-acid chain; its full sequence is Phosphatidylserine decarboxylase proenzyme (287 aa).

Residues Asp90, His147, and Ser252 each act as charge relay system; for autoendoproteolytic cleavage activity in the active site. Residue Ser252 is the Schiff-base intermediate with substrate; via pyruvic acid; for decarboxylase activity of the active site. Ser252 is modified (pyruvic acid (Ser); by autocatalysis).

Belongs to the phosphatidylserine decarboxylase family. PSD-B subfamily. Prokaryotic type I sub-subfamily. As to quaternary structure, heterodimer of a large membrane-associated beta subunit and a small pyruvoyl-containing alpha subunit. The cofactor is pyruvate. Is synthesized initially as an inactive proenzyme. Formation of the active enzyme involves a self-maturation process in which the active site pyruvoyl group is generated from an internal serine residue via an autocatalytic post-translational modification. Two non-identical subunits are generated from the proenzyme in this reaction, and the pyruvate is formed at the N-terminus of the alpha chain, which is derived from the carboxyl end of the proenzyme. The autoendoproteolytic cleavage occurs by a canonical serine protease mechanism, in which the side chain hydroxyl group of the serine supplies its oxygen atom to form the C-terminus of the beta chain, while the remainder of the serine residue undergoes an oxidative deamination to produce ammonia and the pyruvoyl prosthetic group on the alpha chain. During this reaction, the Ser that is part of the protease active site of the proenzyme becomes the pyruvoyl prosthetic group, which constitutes an essential element of the active site of the mature decarboxylase.

The protein localises to the cell membrane. It carries out the reaction a 1,2-diacyl-sn-glycero-3-phospho-L-serine + H(+) = a 1,2-diacyl-sn-glycero-3-phosphoethanolamine + CO2. Its pathway is phospholipid metabolism; phosphatidylethanolamine biosynthesis; phosphatidylethanolamine from CDP-diacylglycerol: step 2/2. In terms of biological role, catalyzes the formation of phosphatidylethanolamine (PtdEtn) from phosphatidylserine (PtdSer). This chain is Phosphatidylserine decarboxylase proenzyme, found in Pseudomonas putida (strain ATCC 700007 / DSM 6899 / JCM 31910 / BCRC 17059 / LMG 24140 / F1).